The primary structure comprises 703 residues: Harmonin-binding protein USHBP1 (703 aa).

Over residues 1–15 (MSARATRPRSRRGRH) the composition is skewed to basic residues. 2 disordered regions span residues 1 to 113 (MSAR…PPGN) and 138 to 172 (HQPP…CQRE). Positions 189–227 (SREDELVRTQASLEAIRAEKETLQKEVQELQDSLLRLEP) form a coiled coil. The interval 228–256 (CPHLSHNQAGGSGSGSSSSEADREPWETQ) is disordered. Positions 289–309 (EMHIMEAQMEQLRGSIEKLKC) form a coiled coil. The interval 396-416 (MDAGAQQNPQPSPEGSSVDKP) is disordered. Over residues 400-410 (AQQNPQPSPEG) the composition is skewed to polar residues. Positions 476–513 (RLEKTQIQQDLVAAREALADLMLRLQLVRREKRGLELR) form a coiled coil. Residues 540-583 (AGGANSSGGHSSGGGSSGDEEEWYQGLPAVPGGTSGIDGGQVGR) are disordered. Gly residues predominate over residues 572–581 (GTSGIDGGQV). Residues 596-681 (ASLTRTLDLQ…QAEEVAVLEA (86 aa)) adopt a coiled-coil conformation.

The protein belongs to the MCC family. Interacts via its C-terminus with the first PDZ domain of USH1C. Highest level of expression in heart, and moderate to low expression in skeletal muscle, kidney, liver, small intestine, placenta and lung.

The protein is Harmonin-binding protein USHBP1 of Homo sapiens (Human).